The primary structure comprises 905 residues: Protein LONGIFOLIA 2 (905 aa).

Disordered stretches follow at residues 42–136, 232–268, 285–315, 432–585, 606–626, and 690–711; these read VSGG…GGLM, RLSLDSRSNSFRSPRADAARSSCPEEPATMTHRRSSS, DTEQRRENRFCDSPRPMSRVEPTALQRSRSV, STSP…SDSN, CDFPEQHTPKQRSPDFGIKQD, and VPFPQSNRGPMKPSSDHFECSP. The span at 65–74 shows a compositional bias: basic and acidic residues; the sequence is ESDKETERSS. A compositionally biased stretch (low complexity) spans 90–117; that stretch reads FESSSRPSFSSSPRSSSFSSAEVSTTAS. Residues 286–296 show a composition bias toward basic and acidic residues; that stretch reads TEQRRENRFCD. Polar residues-rich tracts occupy residues 432–461, 477–487, and 501–516; these read STSPLPQNVTLPNVKVGNSRQTRKVTSGKQ, LDSTKSNSPKT, and MTKSGRSQQHSVSPRT. Positions 566-581 are enriched in basic and acidic residues; sequence PDDRLSDARSDLRSLR.

In terms of assembly, interacts (via C-terminus) with TON1A and TON1B.

The protein localises to the cytoplasm. Its subcellular location is the cytoskeleton. Functionally, in association with LNG1, regulates leaf morphology by promoting longitudinal polar cell elongation independently of ROT3. Associates with microtubules and recruits TON1A and TON1B to the cytoskeleton through its C-terminus. In Arabidopsis thaliana (Mouse-ear cress), this protein is Protein LONGIFOLIA 2 (LNG2).